We begin with the raw amino-acid sequence, 225 residues long: MKHLFKLDPAKNLPMNDLTKLVHSGTNGFIIGGTDNVQIEAVQKLYELLGETDLPIFLEISNESMILPEADHFLIPVVLNTENSKWTHGLHQELIKEMGAFIPWKRVTAEGYVILNKDAKVAHLTEAKTDLTDEDIVAYARLAENIFHLPIFYVEYSGMYGDPEVVRKASAALSNTKFWYGGGIRSKEQAAEMAKYADTIIVGNIIYEDLEKALETATIFRKKTV.

A sn-glycerol 1-phosphate-binding site is contributed by Lys-6. Residues Asp-8 and Thr-34 each contribute to the Mg(2+) site. Residues 153-158 (YVEYSG), Gly-183, and 203-204 (GN) each bind sn-glycerol 1-phosphate.

The protein belongs to the GGGP/HepGP synthase family. Group I subfamily. Homodimer. Requires Mg(2+) as cofactor.

It carries out the reaction sn-glycerol 1-phosphate + all-trans-heptaprenyl diphosphate = 3-heptaprenyl-sn-glycero-1-phosphate + diphosphate. It functions in the pathway membrane lipid metabolism; glycerophospholipid metabolism. In terms of biological role, prenyltransferase that catalyzes in vivo the transfer of the heptaprenyl moiety of heptaprenyl pyrophosphate (HepPP; 35 carbon atoms) to the C3 hydroxyl of sn-glycerol-1-phosphate (G1P), producing heptaprenylglyceryl phosphate (HepGP). This reaction is an ether-bond-formation step in the biosynthesis of archaea-type G1P-based membrane lipids found in Bacillales. This is Heptaprenylglyceryl phosphate synthase from Listeria monocytogenes serotype 4b (strain F2365).